The chain runs to 262 residues: Tryptophan synthase alpha chain (262 aa).

Residues glutamate 48 and aspartate 59 each act as proton acceptor in the active site.

This sequence belongs to the TrpA family. As to quaternary structure, tetramer of two alpha and two beta chains.

It carries out the reaction (1S,2R)-1-C-(indol-3-yl)glycerol 3-phosphate + L-serine = D-glyceraldehyde 3-phosphate + L-tryptophan + H2O. The protein operates within amino-acid biosynthesis; L-tryptophan biosynthesis; L-tryptophan from chorismate: step 5/5. Functionally, the alpha subunit is responsible for the aldol cleavage of indoleglycerol phosphate to indole and glyceraldehyde 3-phosphate. In Helicobacter pylori (strain P12), this protein is Tryptophan synthase alpha chain.